The primary structure comprises 207 residues: Dephospho-CoA kinase (207 aa).

Positions 11–207 constitute a DPCK domain; the sequence is RIGLTGGIAS…LLKMSPTAEL (197 aa). 19–24 lines the ATP pocket; that stretch reads ASGKSS.

This sequence belongs to the CoaE family.

It is found in the cytoplasm. It catalyses the reaction 3'-dephospho-CoA + ATP = ADP + CoA + H(+). It participates in cofactor biosynthesis; coenzyme A biosynthesis; CoA from (R)-pantothenate: step 5/5. Functionally, catalyzes the phosphorylation of the 3'-hydroxyl group of dephosphocoenzyme A to form coenzyme A. The sequence is that of Dephospho-CoA kinase from Synechococcus sp. (strain CC9605).